Reading from the N-terminus, the 39-residue chain is Potassium channel toxin alpha-KTx 2.2 (39 aa).

Disulfide bonds link Cys7–Cys29, Cys13–Cys34, and Cys17–Cys36. Residues 37–39 form an interaction with Kv1.3 channels region; sequence YPH.

It belongs to the short scorpion toxin superfamily. Potassium channel inhibitor family. Alpha-KTx 02 subfamily. In terms of tissue distribution, expressed by the venom gland.

Its subcellular location is the secreted. In terms of biological role, potent inhibitor of voltage-gated potassium channels such as Kv1.1/KCNA1 (IC(50)=0.144 nM), Kv1.2/KCNA2 (IC(50)=0.675 nM), Kv1.3/KCNA3 (IC(50)=0.23 nM) and Shaker (Kd=160 nM). Suppresses expression of the Kv1.3/KCNA3 channel in lipopolysaccharide (LPS)-stimulated mouse macrophages. Down-regulates secretion of nitric oxide (NO) and inflammatory cytokines, such as TNF-alpha/TNF, IL-1beta/IL1B and IL6, in LPS-stimulated mouse macrophages in a manner dependent on Kv1.3/KCNA3 channel blockage. Reduces activation of MAPK and NF-kappa-B signaling pathways in LPS-stimulated mouse macrophages. Modulates intracellular Ca(2+) signaling in human PMA/ionomycin-triggered T-cells. Interferes with the activation of the MAPK, NF-kappa-B and NFATc1 pathways in human PMA/ionomycin-triggered T-cells. Reduces proliferation of human PMA/ionomycin-triggered T-cells. Down-regulates secretion of cytokines, such as TNF-alpha/TNF and IL2, in human PMA/ionomycin-triggered T-cells. This chain is Potassium channel toxin alpha-KTx 2.2, found in Centruroides margaritatus (Central American bark Scorpion).